Here is an 84-residue protein sequence, read N- to C-terminus: MAHKKGASSTRNGRDSNAQYLGVKRFGGQSVNAGEIIVRQRGTHFHPGLNMGRGKDDTLFALAAGVVEFGTRRGRRVVNIQTAE.

It belongs to the bacterial ribosomal protein bL27 family.

This Kocuria rhizophila (strain ATCC 9341 / DSM 348 / NBRC 103217 / DC2201) protein is Large ribosomal subunit protein bL27.